Reading from the N-terminus, the 78-residue chain is FXYD domain-containing ion transport regulator 7 (78 aa).

Residues 1 to 22 are Extracellular-facing; sequence MATQVPTKVPQDPDPFYYDYDT. Residues threonine 3 and threonine 7 are each glycosylated (O-linked (GlcNAc) threonine). The helical transmembrane segment at 23–43 threads the bilayer; the sequence is VQTVGMTLATILFLLGILIIL. At 44-78 the chain is on the cytoplasmic side; the sequence is SKKVKCRKADSRSESPTCKSCKSELPSSAPGGGGV. The interval 52–78 is disordered; it reads ADSRSESPTCKSCKSELPSSAPGGGGV. Serine 71 carries the post-translational modification Phosphoserine.

This sequence belongs to the FXYD family. Regulatory subunit of the sodium/potassium-transporting ATPase which is composed of a catalytic alpha subunit, a non-catalytic beta subunit and an additional regulatory subunit. The regulatory subunit, a member of the FXYD protein family, modulates the enzymatic activity in a tissue- and isoform-specific way by changing affinities of the Na+/K+-ATPase toward Na(+), K(+) or ATP. In terms of processing, O-glycosylated; required for stabilization and translocation to the plasma membrane.

Its subcellular location is the cell membrane. Associates with and regulates the activity of the sodium/potassium-transporting ATPase (NKA) which catalyzes the hydrolysis of ATP coupled with the exchange of Na(+) and K(+) ions across the plasma membrane. Reduces the apparent affinity for external K(+), an effect that depends on the presence of external Na(+) and voltage. Increases the apparent affinity for intracellular Na(+). This chain is FXYD domain-containing ion transport regulator 7 (FXYD7), found in Bos taurus (Bovine).